Consider the following 242-residue polypeptide: Floral homeotic protein AGAMOUS (242 aa).

The MADS-box domain maps to 19 to 73; it reads RGKIEIKRIENTTNRQVTFCKRRNGLLKKAYELSVLCDAEVALIVFSTRGRLYEY. One can recognise a K-box domain in the interval 103–193; it reads AQFYQQEASK…RAKIAENERA (91 aa).

As to expression, flower. Preferentially expressed in stamen and carpel and weakly in petal. Undetected in leaves and roots.

The protein resides in the nucleus. Probable transcription factor involved in regulating genes that determines stamen and carpel development in wild-type flowers. This is Floral homeotic protein AGAMOUS (AG2) from Panax ginseng (Korean ginseng).